The sequence spans 368 residues: C2H2 type master regulator of conidiophore development BrlA (368 aa).

Residues Cys268–Phe292 form a C2H2-type 1; degenerate zinc finger. The C2H2-type 2 zinc-finger motif lies at Phe300–His323. A disordered region spans residues Ala338–Tyr368. Residues Lys359 to Tyr368 show a composition bias toward basic and acidic residues.

It is found in the nucleus. Its function is as follows. BrlA, abaA and wetA are pivotal regulators of conidiophore development and conidium maturation. They act individually and together to regulate their own expression and that of numerous other sporulation-specific genes. BrlA, abaA and wetA act together to positively regulate the expression of the Pks1 gene cluster that mediates the biosynthesis of an anthraquinone derivative pigment that contributes to conidial pigmentation that provides protection from UV radiation, heat and cold stress. This is C2H2 type master regulator of conidiophore development BrlA from Metarhizium robertsii (strain ARSEF 23 / ATCC MYA-3075) (Metarhizium anisopliae (strain ARSEF 23)).